The primary structure comprises 305 residues: UDP-3-O-acyl-N-acetylglucosamine deacetylase (305 aa).

Zn(2+) is bound by residues histidine 79, histidine 238, and aspartate 242. Histidine 265 functions as the Proton donor in the catalytic mechanism.

This sequence belongs to the LpxC family. It depends on Zn(2+) as a cofactor.

The catalysed reaction is a UDP-3-O-[(3R)-3-hydroxyacyl]-N-acetyl-alpha-D-glucosamine + H2O = a UDP-3-O-[(3R)-3-hydroxyacyl]-alpha-D-glucosamine + acetate. Its pathway is glycolipid biosynthesis; lipid IV(A) biosynthesis; lipid IV(A) from (3R)-3-hydroxytetradecanoyl-[acyl-carrier-protein] and UDP-N-acetyl-alpha-D-glucosamine: step 2/6. Its function is as follows. Catalyzes the hydrolysis of UDP-3-O-myristoyl-N-acetylglucosamine to form UDP-3-O-myristoylglucosamine and acetate, the committed step in lipid A biosynthesis. The sequence is that of UDP-3-O-acyl-N-acetylglucosamine deacetylase from Cronobacter sakazakii (strain ATCC BAA-894) (Enterobacter sakazakii).